Consider the following 874-residue polypeptide: Alanine--tRNA ligase (874 aa).

Histidine 564, histidine 568, cysteine 665, and histidine 669 together coordinate Zn(2+).

It belongs to the class-II aminoacyl-tRNA synthetase family. Requires Zn(2+) as cofactor.

It is found in the cytoplasm. It carries out the reaction tRNA(Ala) + L-alanine + ATP = L-alanyl-tRNA(Ala) + AMP + diphosphate. In terms of biological role, catalyzes the attachment of alanine to tRNA(Ala) in a two-step reaction: alanine is first activated by ATP to form Ala-AMP and then transferred to the acceptor end of tRNA(Ala). Also edits incorrectly charged Ser-tRNA(Ala) and Gly-tRNA(Ala) via its editing domain. In Burkholderia multivorans (strain ATCC 17616 / 249), this protein is Alanine--tRNA ligase.